The sequence spans 382 residues: Anhydro-N-acetylmuramic acid kinase (382 aa).

ATP is bound at residue 22–29 (GTSMDGVD).

The protein belongs to the anhydro-N-acetylmuramic acid kinase family.

It carries out the reaction 1,6-anhydro-N-acetyl-beta-muramate + ATP + H2O = N-acetyl-D-muramate 6-phosphate + ADP + H(+). Its pathway is amino-sugar metabolism; 1,6-anhydro-N-acetylmuramate degradation. It participates in cell wall biogenesis; peptidoglycan recycling. Functionally, catalyzes the specific phosphorylation of 1,6-anhydro-N-acetylmuramic acid (anhMurNAc) with the simultaneous cleavage of the 1,6-anhydro ring, generating MurNAc-6-P. Is required for the utilization of anhMurNAc either imported from the medium or derived from its own cell wall murein, and thus plays a role in cell wall recycling. In Burkholderia ambifaria (strain ATCC BAA-244 / DSM 16087 / CCUG 44356 / LMG 19182 / AMMD) (Burkholderia cepacia (strain AMMD)), this protein is Anhydro-N-acetylmuramic acid kinase.